A 433-amino-acid polypeptide reads, in one-letter code: tRNA-2-methylthio-N(6)-dimethylallyladenosine synthase (433 aa).

Positions 4–119 constitute an MTTase N-terminal domain; that stretch reads KKLFIQTLGC…ITQAIKTPKF (116 aa). Residues cysteine 13, cysteine 50, cysteine 82, cysteine 151, cysteine 155, and cysteine 158 each contribute to the [4Fe-4S] cluster site. Residues 137 to 370 enclose the Radical SAM core domain; it reads RNSIYKSYIN…QNRHSEILDE (234 aa). Residues 373–433 enclose the TRAM domain; that stretch reads KKQENKTFKV…KRMVLYGEIV (61 aa).

It belongs to the methylthiotransferase family. MiaB subfamily. Monomer. It depends on [4Fe-4S] cluster as a cofactor.

The protein resides in the cytoplasm. It catalyses the reaction N(6)-dimethylallyladenosine(37) in tRNA + (sulfur carrier)-SH + AH2 + 2 S-adenosyl-L-methionine = 2-methylsulfanyl-N(6)-dimethylallyladenosine(37) in tRNA + (sulfur carrier)-H + 5'-deoxyadenosine + L-methionine + A + S-adenosyl-L-homocysteine + 2 H(+). Functionally, catalyzes the methylthiolation of N6-(dimethylallyl)adenosine (i(6)A), leading to the formation of 2-methylthio-N6-(dimethylallyl)adenosine (ms(2)i(6)A) at position 37 in tRNAs that read codons beginning with uridine. The polypeptide is tRNA-2-methylthio-N(6)-dimethylallyladenosine synthase (Campylobacter jejuni (strain RM1221)).